The following is a 247-amino-acid chain: Cementoblastoma-derived protein 1 (247 aa).

Positions 1–28 are enriched in polar residues; the sequence is MGTSSTDSQQAGHRRCSTSNTSAENLTC. Disordered stretches follow at residues 1 to 52 and 147 to 183; these read MGTS…AGQP and EENS…EKVK.

Post-translationally, phosphorylated. N-glycosylated. As to expression, expressed by cementoblasts, a subpopulation of periodontal ligament cells and cells located around vessels in periodontium (at protein level).

The protein resides in the cytoplasm. It localises to the nucleus. Functionally, may play a role in development of the periodontium which surrounds and supports the teeth by promoting the differentiation of multi-potent cells from the periodontal ligament into cementoblasts to form the cementum. Binds hydroxyapatite and may promote the biomineralization of the cementum. Also promotes cell proliferation. This chain is Cementoblastoma-derived protein 1, found in Homo sapiens (Human).